Reading from the N-terminus, the 806-residue chain is Transitional endoplasmic reticulum ATPase (806 aa).

Ala-2 carries the post-translational modification N-acetylalanine. 2 positions are modified to phosphoserine: Ser-3 and Ser-7. A Glycyl lysine isopeptide (Lys-Gly) (interchain with G-Cter in SUMO2) cross-link involves residue Lys-8. Position 13 is a phosphoserine (Ser-13). A Glycyl lysine isopeptide (Lys-Gly) (interchain with G-Cter in SUMO2) cross-link involves residue Lys-18. Ser-37 is subject to Phosphoserine. Residue Pro-247 to Leu-253 coordinates ATP. Lys-315 is subject to N6,N6,N6-trimethyllysine; by VCPKMT. Positions 348 and 384 each coordinate ATP. A Phosphothreonine modification is found at Thr-436. Ser-462 bears the Phosphoserine mark. N6-acetyllysine is present on residues Lys-502 and Lys-505. Position 521–526 (Gly-521–Leu-526) interacts with ATP. N6-acetyllysine; alternate is present on Lys-668. N6-succinyllysine; alternate is present on Lys-668. Ser-702 is modified (phosphoserine). A disordered region spans residues Arg-708–Pro-727. Lys-754 carries the post-translational modification N6-acetyllysine. The segment at Phe-768–Gly-806 is disordered. A phosphoserine mark is found at Ser-770, Ser-775, and Ser-787. Residues Asn-777–Gly-793 are compositionally biased toward gly residues. An interaction with UBXN6 region spans residues Thr-797–Gly-806. Tyr-805 is modified (phosphotyrosine).

The protein belongs to the AAA ATPase family. Homohexamer. Forms a ring-shaped particle of 12.5 nm diameter, that displays 6-fold radial symmetry. Part of a ternary complex containing STX5A, NSFL1C and VCP. NSFL1C forms a homotrimer that binds to one end of a VCP homohexamer. The complex binds to membranes enriched in phosphatidylethanolamine-containing lipids and promotes Golgi membrane fusion. Binds to a heterodimer of NPLOC4 and UFD1, binding to this heterodimer inhibits Golgi-membrane fusion. Interaction with VCIP135 leads to dissociation of the complex via ATP hydrolysis by VCP. Part of a ternary complex containing NPLOC4, UFD1 and VCP. Interacts with NSFL1C-like protein p37; the complex has membrane fusion activity and is required for Golgi and endoplasmic reticulum biogenesis. Interacts with SELENOS and SYVN1, as well as with DERL1 (via SHP-box motif), DERL2 and DERL3; which probably transfer misfolded proteins from the ER to VCP. Interacts with SVIP and DERL1. Component of a complex required to couple retrotranslocation, ubiquitination and deglycosylation composed of NGLY1, SAKS1, AMFR, VCP and RAD23B. Part of a complex composed of STUB1/CHIP, VCP/p97, CHRNA3, and UBXN2A that modulates the ubiquitination and endoplasmic reticulum-associated degradation (ERAD) of CHRNA3. Within the complex UBXN2A acts as a scaffold protein required for the interaction of CHRNA3 with VCP/p97, this interaction also inhibits CHRNA3 ubiquitination by STUB1/CHIP and subsequently ERAD. Interacts with UBXN2A (via UBX domain); the interaction is required for the interaction of CHRNA3 in the STUB1-VCP-UBXN2A complex. Directly interacts with UBXN4 and RNF19A. Interacts with CASR. Interacts with UBE4B and YOD1. Interacts with clathrin. Interacts with RNF103. Interacts with TRIM13 and TRIM21. Component of a VCP/p97-AMFR/gp78 complex that participates in the final step of the endoplasmic reticulum-associated degradation (ERAD) of HMGCR. Interacts directly with AMFR/gp78 (via its VIM). Interacts with RHBDD1 (via C-terminal domain). Interacts with SPRTN; leading to recruitment to stalled replication forks. Interacts with WASHC5. Interacts with UBOX5. Interacts (via N-terminus) with UBXN7, UBXN8, and probably several other UBX domain-containing proteins (via UBX domains); the interactions are mutually exclusive with VIM-dependent interactions such as those with AMFR and SELENOS. Forms a complex with UBQLN1 and UBXN4. Interacts (via the PIM motif) with RNF31 (via the PUB domain). Interacts with RIGI and RNF125; interaction takes place when RIGI is ubiquitinated via 'Lys-63'-linked ubiquitin on its CARD domains, leading to recruit RNF125 and promote ubiquitination and degradation of RIGI. Interacts with BAG6. Interacts with UBXN10. Interacts with UBXN6; the interaction with UBXN6 is direct and competitive with UFD1. Forms a ternary complex with CAV1 and UBXN6. Interacts with PLAA, UBXN6 and YOD1; may form a complex involved in macroautophagy. Interacts with ANKZF1. Interacts with ubiquitin-binding protein FAF1. Interacts with ZFAND2B (via VIM motif); the interaction is direct. Interacts with ZFAND1 (via its ubiquitin-like region); this interaction occurs in an arsenite-dependent manner. Interacts with CCDC47. Interacts with LMBR1L and UBAC2. Interacts with ATXN3. Interacts with TEX264; bridging VCP to covalent DNA-protein cross-links (DPCs). Mg(2+) serves as cofactor. Post-translationally, ISGylated. In terms of processing, methylation at Lys-315 catalyzed by VCPKMT is increased in the presence of ASPSCR1. Lys-315 methylation may decrease ATPase activity. Phosphorylated by tyrosine kinases in response to T-cell antigen receptor activation. Phosphorylated in mitotic cells.

The protein localises to the cytoplasm. It localises to the cytosol. Its subcellular location is the endoplasmic reticulum. The protein resides in the nucleus. It is found in the stress granule. The catalysed reaction is ATP + H2O = ADP + phosphate + H(+). Functionally, necessary for the fragmentation of Golgi stacks during mitosis and for their reassembly after mitosis. Involved in the formation of the transitional endoplasmic reticulum (tER). The transfer of membranes from the endoplasmic reticulum to the Golgi apparatus occurs via 50-70 nm transition vesicles which derive from part-rough, part-smooth transitional elements of the endoplasmic reticulum (tER). Vesicle budding from the tER is an ATP-dependent process. The ternary complex containing UFD1, VCP and NPLOC4 binds ubiquitinated proteins and is necessary for the export of misfolded proteins from the ER to the cytoplasm, where they are degraded by the proteasome. The NPLOC4-UFD1-VCP complex regulates spindle disassembly at the end of mitosis and is necessary for the formation of a closed nuclear envelope. Regulates E3 ubiquitin-protein ligase activity of RNF19A. Component of the VCP/p97-AMFR/gp78 complex that participates in the final step of the sterol-mediated ubiquitination and endoplasmic reticulum-associated degradation (ERAD) of HMGCR. Mediates the endoplasmic reticulum-associated degradation of CHRNA3 in cortical neurons as part of the STUB1-VCP-UBXN2A complex. Involved in endoplasmic reticulum stress-induced pre-emptive quality control, a mechanism that selectively attenuates the translocation of newly synthesized proteins into the endoplasmic reticulum and reroutes them to the cytosol for proteasomal degradation. Involved in clearance process by mediating G3BP1 extraction from stress granules. Also involved in DNA damage response: recruited to double-strand breaks (DSBs) sites in a RNF8- and RNF168-dependent manner and promotes the recruitment of TP53BP1 at DNA damage sites. Recruited to stalled replication forks by SPRTN: may act by mediating extraction of DNA polymerase eta (POLH) to prevent excessive translesion DNA synthesis and limit the incidence of mutations induced by DNA damage. Together with SPRTN metalloprotease, involved in the repair of covalent DNA-protein cross-links (DPCs) during DNA synthesis. Involved in interstrand cross-link repair in response to replication stress by mediating unloading of the ubiquitinated CMG helicase complex. Mediates extraction of PARP1 trapped to chromatin: recognizes and binds ubiquitinated PARP1 and promotes its removal. Required for cytoplasmic retrotranslocation of stressed/damaged mitochondrial outer-membrane proteins and their subsequent proteasomal degradation. Essential for the maturation of ubiquitin-containing autophagosomes and the clearance of ubiquitinated protein by autophagy. Acts as a negative regulator of type I interferon production by interacting with RIGI: interaction takes place when RIGI is ubiquitinated via 'Lys-63'-linked ubiquitin on its CARD domains, leading to recruit RNF125 and promote ubiquitination and degradation of RIGI. May play a role in the ubiquitin-dependent sorting of membrane proteins to lysosomes where they undergo degradation. May more particularly play a role in caveolins sorting in cells. By controlling the steady-state expression of the IGF1R receptor, indirectly regulates the insulin-like growth factor receptor signaling pathway. This is Transitional endoplasmic reticulum ATPase (VCP) from Sus scrofa (Pig).